Reading from the N-terminus, the 142-residue chain is Transcription antitermination protein NusB (142 aa).

It belongs to the NusB family.

Functionally, involved in transcription antitermination. Required for transcription of ribosomal RNA (rRNA) genes. Binds specifically to the boxA antiterminator sequence of the ribosomal RNA (rrn) operons. This Actinobacillus succinogenes (strain ATCC 55618 / DSM 22257 / CCUG 43843 / 130Z) protein is Transcription antitermination protein NusB.